The sequence spans 726 residues: Catalase-peroxidase (726 aa).

Positions 98–226 (WHSAGTYRMQ…LAAVHMGLIY (129 aa)) form a cross-link, tryptophyl-tyrosyl-methioninium (Trp-Tyr) (with M-252). Residue His99 is the Proton acceptor of the active site. Positions 226–252 (YVNPEGVNGQPDPARTAQHVRETFARM) form a cross-link, tryptophyl-tyrosyl-methioninium (Tyr-Met) (with W-98). His267 serves as a coordination point for heme b.

This sequence belongs to the peroxidase family. Peroxidase/catalase subfamily. In terms of assembly, homodimer or homotetramer. Heme b serves as cofactor. Formation of the three residue Trp-Tyr-Met cross-link is important for the catalase, but not the peroxidase activity of the enzyme.

It catalyses the reaction H2O2 + AH2 = A + 2 H2O. The catalysed reaction is 2 H2O2 = O2 + 2 H2O. Its function is as follows. Bifunctional enzyme with both catalase and broad-spectrum peroxidase activity. This Roseobacter denitrificans (strain ATCC 33942 / OCh 114) (Erythrobacter sp. (strain OCh 114)) protein is Catalase-peroxidase.